Reading from the N-terminus, the 241-residue chain is Pyridoxine 5'-phosphate synthase (241 aa).

Asn-7 is a 3-amino-2-oxopropyl phosphate binding site. 9–10 (DH) contacts 1-deoxy-D-xylulose 5-phosphate. Arg-18 contacts 3-amino-2-oxopropyl phosphate. The Proton acceptor role is filled by His-43. Arg-45 and His-50 together coordinate 1-deoxy-D-xylulose 5-phosphate. The active-site Proton acceptor is the Glu-70. Thr-100 serves as a coordination point for 1-deoxy-D-xylulose 5-phosphate. The active-site Proton donor is the His-191. Residues Gly-192 and 213–214 (GH) contribute to the 3-amino-2-oxopropyl phosphate site.

This sequence belongs to the PNP synthase family. In terms of assembly, homooctamer; tetramer of dimers.

The protein localises to the cytoplasm. The catalysed reaction is 3-amino-2-oxopropyl phosphate + 1-deoxy-D-xylulose 5-phosphate = pyridoxine 5'-phosphate + phosphate + 2 H2O + H(+). Its pathway is cofactor biosynthesis; pyridoxine 5'-phosphate biosynthesis; pyridoxine 5'-phosphate from D-erythrose 4-phosphate: step 5/5. Catalyzes the complicated ring closure reaction between the two acyclic compounds 1-deoxy-D-xylulose-5-phosphate (DXP) and 3-amino-2-oxopropyl phosphate (1-amino-acetone-3-phosphate or AAP) to form pyridoxine 5'-phosphate (PNP) and inorganic phosphate. The protein is Pyridoxine 5'-phosphate synthase of Maridesulfovibrio salexigens (strain ATCC 14822 / DSM 2638 / NCIMB 8403 / VKM B-1763) (Desulfovibrio salexigens).